The chain runs to 487 residues: Chromosomal replication initiator protein DnaA (487 aa).

Residues 1-71 form a domain I, interacts with DnaA modulators region; it reads MMHDALFERF…TSLVQSEDPD (71 aa). Residues 71-141 are domain II; the sequence is DVLKVEILVR…QGGSGPLFGS (71 aa). The segment at 142-364 is domain III, AAA+ region; it reads PLDTRFTFDT…GAFNQLMFRR (223 aa). ATP contacts are provided by G188, G190, K191, and T192. The interval 365–487 is domain IV, binds dsDNA; it reads SFEPNLSVDR…LKRLINENNA (123 aa).

This sequence belongs to the DnaA family. Oligomerizes as a right-handed, spiral filament on DNA at oriC.

Its subcellular location is the cytoplasm. Plays an essential role in the initiation and regulation of chromosomal replication. ATP-DnaA binds to the origin of replication (oriC) to initiate formation of the DNA replication initiation complex once per cell cycle. Binds the DnaA box (a 9 base pair repeat at the origin) and separates the double-stranded (ds)DNA. Forms a right-handed helical filament on oriC DNA; dsDNA binds to the exterior of the filament while single-stranded (ss)DNA is stabiized in the filament's interior. The ATP-DnaA-oriC complex binds and stabilizes one strand of the AT-rich DNA unwinding element (DUE), permitting loading of DNA polymerase. After initiation quickly degrades to an ADP-DnaA complex that is not apt for DNA replication. Binds acidic phospholipids. The protein is Chromosomal replication initiator protein DnaA of Agrobacterium fabrum (strain C58 / ATCC 33970) (Agrobacterium tumefaciens (strain C58)).